The chain runs to 489 residues: Palmitoyltransferase ZDHHC14 (489 aa).

Residues 1-60 are Cytoplasmic-facing; it reads MPPGGGGPMKDCEYSQISTHSSSPMESPHKKKKIAARRKWEVFPGRNKFFCNGRIMMARQ. The chain crosses the membrane as a helical span at residues 61–81; sequence TGVFYLTLILILVTSGLFFAF. Topologically, residues 82–89 are lumenal; sequence DCRYLAEK. Residues 90–110 traverse the membrane as a helical segment; the sequence is ITPAIPVVGGILFFFVMGTLL. Residues 111–208 are Cytoplasmic-facing; that stretch reads RTSFSDPGVL…GNCVGKRNYR (98 aa). In terms of domain architecture, DHHC spans 165-215; that stretch reads KYCFTCKIFRPPRASHCSLCDNCVEQFDHHCPWVGNCVGKRNYRFFYMFIL. Cys195 serves as the catalytic S-palmitoyl cysteine intermediate. The helical transmembrane segment at 209–229 threads the bilayer; it reads FFYMFILSLSFLTVFIFAFVI. The Lumenal portion of the chain corresponds to 230-255; the sequence is THVIHRSQQKGFLDALKDSPASVLEA. Residues 256–276 traverse the membrane as a helical segment; that stretch reads VICFFSVWSIIGLSGFHTYLI. The Cytoplasmic segment spans residues 277–489; that stretch reads SSNQTTNEDI…VRGLVKLSSV (213 aa). The segment at 434-454 is disordered; that stretch reads HGGHQFLTPDEAPSPPRMLGA. Position 456 is a phosphoserine (Ser456).

Belongs to the DHHC palmitoyltransferase family. ERF2/ZDHHC9 subfamily.

It is found in the endoplasmic reticulum membrane. Its subcellular location is the golgi apparatus membrane. It carries out the reaction L-cysteinyl-[protein] + hexadecanoyl-CoA = S-hexadecanoyl-L-cysteinyl-[protein] + CoA. Its function is as follows. Palmitoyltransferase that could catalyze the addition of palmitate onto various protein substrates. May have a palmitoyltransferase activity toward the beta-2 adrenergic receptor/ADRB2 and thereby regulate G protein-coupled receptor signaling. May play a role in cell differentiation and apoptosis. The polypeptide is Palmitoyltransferase ZDHHC14 (Mus musculus (Mouse)).